The sequence spans 193 residues: Superoxide dismutase [Fe] (193 aa).

Histidine 27 lines the Fe cation pocket. Lysine 51 is modified (N6-acetyllysine). Histidine 74, aspartate 157, and histidine 161 together coordinate Fe cation.

It belongs to the iron/manganese superoxide dismutase family. In terms of assembly, homodimer. The cofactor is Fe cation.

It carries out the reaction 2 superoxide + 2 H(+) = H2O2 + O2. Its function is as follows. Destroys superoxide anion radicals which are normally produced within the cells and which are toxic to biological systems. This Escherichia coli O157:H7 protein is Superoxide dismutase [Fe] (sodB).